Consider the following 621-residue polypeptide: CEP295 N-terminal-like protein (621 aa).

The segment at 142–253 (GGRARENEPD…RSKGADLERS (112 aa)) is disordered. Basic residues predominate over residues 159–170 (RSARPPRAKEKH). Positions 171-185 (RAALSEERSCREELG) are enriched in basic and acidic residues. A compositionally biased stretch (polar residues) spans 203 to 213 (KPQTTKATGRM). The segment covering 219-229 (PPEKRKGRPEP) has biased composition (basic and acidic residues). Residues 328–359 (QCTLREKNKWQKELELAFEELFNINRKLKKHL) are a coiled coil. 3 disordered regions span residues 385–421 (CGAG…ASKT), 491–529 (DQAD…PDMS), and 543–586 (REQR…DRHS). Residues 498-525 (STASRQRQKAEMEQRRQKQLESLEQMEH) are a coiled coil. The span at 505-529 (QKAEMEQRRQKQLESLEQMEHPDMS) shows a compositional bias: basic and acidic residues. The segment covering 568-578 (ELSTTSPSGTS) has biased composition (polar residues).

It is found in the cell projection. The protein resides in the cilium. The protein is CEP295 N-terminal-like protein of Homo sapiens (Human).